A 249-amino-acid chain; its full sequence is Probable transcriptional regulatory protein MXAN_4974 (249 aa).

Belongs to the TACO1 family.

The protein resides in the cytoplasm. The protein is Probable transcriptional regulatory protein MXAN_4974 of Myxococcus xanthus (strain DK1622).